The primary structure comprises 439 residues: N5-carboxyaminoimidazole ribonucleotide synthase (439 aa).

ATP contacts are provided by residues Lys-113, Lys-160, 197–200 (EERV), Glu-205, and 283–284 (NE). The region spanning 117–313 (RRRLAALGAA…QFEQHLRAVL (197 aa)) is the ATP-grasp domain.

The protein belongs to the PurK/PurT family. As to quaternary structure, homodimer.

It carries out the reaction 5-amino-1-(5-phospho-beta-D-ribosyl)imidazole + hydrogencarbonate + ATP = 5-carboxyamino-1-(5-phospho-D-ribosyl)imidazole + ADP + phosphate + 2 H(+). The protein operates within purine metabolism; IMP biosynthesis via de novo pathway; 5-amino-1-(5-phospho-D-ribosyl)imidazole-4-carboxylate from 5-amino-1-(5-phospho-D-ribosyl)imidazole (N5-CAIR route): step 1/2. Functionally, catalyzes the ATP-dependent conversion of 5-aminoimidazole ribonucleotide (AIR) and HCO(3)(-) to N5-carboxyaminoimidazole ribonucleotide (N5-CAIR). The chain is N5-carboxyaminoimidazole ribonucleotide synthase from Mycobacterium leprae (strain TN).